The following is a 243-amino-acid chain: Venom nerve growth factor 1 (243 aa).

The signal sequence occupies residues 1–18 (MSMLCYTLIIAFLIGIWA). Positions 19–125 (VPKSEDNAPL…ALNRNIRAKR (107 aa)) are excised as a propeptide. 3 disulfide bridges follow: cysteine 139–cysteine 204, cysteine 182–cysteine 232, and cysteine 192–cysteine 234. The N-linked (GlcNAc...) asparagine glycan is linked to asparagine 148.

The protein belongs to the NGF-beta family. In terms of assembly, homodimer; non-covalently linked. As to expression, expressed by the venom gland.

Its subcellular location is the secreted. Nerve growth factor is important for the development and maintenance of the sympathetic and sensory nervous systems. It stimulates division and differentiation of sympathetic and embryonic sensory neurons as well as basal forebrain cholinergic neurons in the brain. Its relevance in the snake venom is not clear. However, it has been shown to inhibit metalloproteinase-dependent proteolysis of platelet glycoprotein Ib alpha, suggesting a metalloproteinase inhibition to prevent metalloprotease autodigestion and/or protection against prey proteases. Binds a lipid between the two protein chains in the homodimer. The lipid-bound form promotes histamine relase from mouse mast cells, contrary to the lipid-free form. In Naja sputatrix (Malayan spitting cobra), this protein is Venom nerve growth factor 1.